The primary structure comprises 576 residues: Zinc finger protein 791 (576 aa).

One can recognise a KRAB domain in the interval Val4–Val90. 17 consecutive C2H2-type zinc fingers follow at residues Tyr100–His122, Tyr132–His154, Tyr160–His182, Tyr188–His210, Tyr216–His238, Tyr244–His266, Tyr272–His294, Tyr300–His322, Tyr328–His350, Tyr356–His378, Tyr384–His406, Tyr412–His434, Tyr440–His462, Tyr468–His490, Tyr496–His518, Tyr524–His546, and Leu552–His574.

Belongs to the krueppel C2H2-type zinc-finger protein family.

The protein resides in the nucleus. Functionally, may be involved in transcriptional regulation. This Homo sapiens (Human) protein is Zinc finger protein 791 (ZNF791).